Here is a 172-residue protein sequence, read N- to C-terminus: ATP synthase subunit b (172 aa).

A helical transmembrane segment spans residues 27–47 (LAIVIFGLYKFLPPFIGGILE).

Belongs to the ATPase B chain family. As to quaternary structure, F-type ATPases have 2 components, F(1) - the catalytic core - and F(0) - the membrane proton channel. F(1) has five subunits: alpha(3), beta(3), gamma(1), delta(1), epsilon(1). F(0) has four main subunits: a(1), b(1), b'(1) and c(10-14). The alpha and beta chains form an alternating ring which encloses part of the gamma chain. F(1) is attached to F(0) by a central stalk formed by the gamma and epsilon chains, while a peripheral stalk is formed by the delta, b and b' chains.

The protein resides in the cellular thylakoid membrane. Functionally, f(1)F(0) ATP synthase produces ATP from ADP in the presence of a proton or sodium gradient. F-type ATPases consist of two structural domains, F(1) containing the extramembraneous catalytic core and F(0) containing the membrane proton channel, linked together by a central stalk and a peripheral stalk. During catalysis, ATP synthesis in the catalytic domain of F(1) is coupled via a rotary mechanism of the central stalk subunits to proton translocation. Its function is as follows. Component of the F(0) channel, it forms part of the peripheral stalk, linking F(1) to F(0). This Prochlorococcus marinus (strain MIT 9313) protein is ATP synthase subunit b.